The chain runs to 210 residues: Ribosomal RNA small subunit methyltransferase G (210 aa).

Residues G77, F82, 100–102, 128–129, and R141 contribute to the S-adenosyl-L-methionine site; these read ERS and VE.

It belongs to the methyltransferase superfamily. RNA methyltransferase RsmG family.

The protein resides in the cytoplasm. In terms of biological role, specifically methylates the N7 position of a guanine in 16S rRNA. This is Ribosomal RNA small subunit methyltransferase G from Borrelia duttonii (strain Ly).